Here is a 407-residue protein sequence, read N- to C-terminus: BRCA1-A complex subunit Abraxas 1 (407 aa).

Positions 7–155 (LGVLSGFVLG…THCLEHALYK (149 aa)) constitute an MPN domain. Residue Ser48 is modified to Phosphoserine. Positions 209-259 (LKEVHKINEMYAAVQEELKSICQKVEQSEREVEKLLMDVNQLKEVRRTQQA) form a coiled coil. Residues 344–407 (KRKALDTHDQ…DADYPRSPTF (64 aa)) are disordered. The segment covering 347-366 (ALDTHDQGSVKRPRLLETES) has biased composition (basic and acidic residues). Residues Ser384, Ser385, Ser394, and Ser404 each carry the phosphoserine modification. Residues 388 to 399 (IDIEMGSPEDDA) show a composition bias toward acidic residues. The pSXXF motif signature appears at 404-407 (SPTF).

Belongs to the FAM175 family. Abraxas subfamily. Component of the ARISC complex, at least composed of UIMC1/RAP80, ABRAXAS1, BRCC3/BRCC36, BABAM2 and BABAM1/NBA1. Component of the BRCA1-A complex, at least composed of the BRCA1, BARD1, UIMC1/RAP80, ABRAXAS1, BRCC3/BRCC36, BABAM2 and BABAM1/NBA1. In the complex, interacts directly with UIMC1/RAP80, BRCC3/BRCC36 and BABAM2. Homodimer. Interacts directly (when phosphorylated at Ser-404) with BRCA1. The phosphorylated homodimer can interact directly with two BRCA1 chains, giving rise to a heterotetramer. Binds polyubiquitin. Post-translationally, phosphorylation of Ser-404 of the pSXXF motif by ATM or ATR constitutes a specific recognition motif for the BRCT domain of BRCA1.

It localises to the nucleus. Involved in DNA damage response and double-strand break (DSB) repair. Component of the BRCA1-A complex, acting as a central scaffold protein that assembles the various components of the complex and mediates the recruitment of BRCA1. The BRCA1-A complex specifically recognizes 'Lys-63'-linked ubiquitinated histones H2A and H2AX at DNA lesion sites, leading to target the BRCA1-BARD1 heterodimer to sites of DNA damage at DSBs. This complex also possesses deubiquitinase activity that specifically removes 'Lys-63'-linked ubiquitin on histones H2A and H2AX. The sequence is that of BRCA1-A complex subunit Abraxas 1 from Mus musculus (Mouse).